The primary structure comprises 678 residues: AAC-rich mRNA clone AAC4 protein (678 aa).

Residues 55–73 (NNNNNNNNNNNNNNNNNNN) are compositionally biased toward low complexity. Positions 55 to 75 (NNNNNNNNNNNNNNNNNNNTS) are disordered. The helical transmembrane segment at 243–263 (IIPIYHEIILVLCNWLVVAFY) threads the bilayer. Residues 318–346 (NNNNNNNNNNNNNNNNNNNNNNNNKTNNN) show a composition bias toward low complexity. The interval 318-347 (NNNNNNNNNNNNNNNNNNNNNNNNKTNNNQ) is disordered.

It is found in the membrane. The sequence is that of AAC-rich mRNA clone AAC4 protein (AAC4) from Dictyostelium discoideum (Social amoeba).